A 1320-amino-acid chain; its full sequence is Myopalladin (1320 aa).

The interval 1 to 522 (MQDDSIEAST…FTCTASNKYG (522 aa)) is interaction with CARP. Disordered regions lie at residues 19–68 (SYLA…AFLS), 84–145 (NYDP…SETQ), and 165–271 (FKSH…PPRF). 2 stretches are compositionally biased toward basic and acidic residues: residues 23-35 (ETRHRGNNERSRA) and 87-106 (PLEKADETQARKRLSPDQMK). Ser-101 is subject to Phosphoserine. Positions 107-130 (HSPNLSFEPNFCQDNPRSPTSSKE) are enriched in polar residues. Residue Ser-131 is modified to Phosphoserine. Residues 168–182 (HSSKRIRPRACKNHK) show a composition bias toward basic residues. Positions 186–201 (ESQNKVMQENSSSFSD) are enriched in polar residues. Basic and acidic residues predominate over residues 218 to 239 (DTRDNEVNHALEQQEAKRREAE). The stretch at 219–248 (TRDNEVNHALEQQEAKRREAEQAASEAAGG) forms a coiled coil. The segment covering 240-258 (QAASEAAGGDTTPGSSPSS) has biased composition (low complexity). Residue Thr-251 is modified to Phosphothreonine. Ig-like domains are found at residues 269-359 (PRFT…IYIE) and 435-531 (PVFT…AQLH). 2 cysteine pairs are disulfide-bonded: Cys-290-Cys-341 and Cys-456-Cys-515. Residues 554–655 (AAIEPQPSPP…VKEPPPVLAK (102 aa)) are disordered. A compositionally biased stretch (pro residues) spans 559–575 (QPSPPHSEPPSVEQPPK). Residue Ser-644 is modified to Phosphoserine. Residues 649–677 (PPPVLAKPKLDSTQLQQLHNQVLLEQHQL) form an interaction with NEB region. Phosphoserine is present on Ser-759. The interval 763–805 (LLVSHPSVQTKSPGGLSIQNEPLPPGPTEPTPPPFTFSIPSGN) is disordered. Over residues 768 to 782 (PSVQTKSPGGLSIQN) the composition is skewed to polar residues. The segment covering 784 to 797 (PLPPGPTEPTPPPF) has biased composition (pro residues). Residues Ser-813, Ser-818, Ser-867, Ser-907, and Ser-928 each carry the phosphoserine modification. A disordered region spans residues 844 to 876 (NAMGLPRSAPSMPSQGLAKKNTKSPQPVNDDNI). Ig-like domains lie at 945–1029 (PIFD…GRIS), 1073–1162 (PHFL…LELS), and 1172–1262 (PVIL…ARLD). Residues 945–1320 (PIFDKRLKHF…SRSVVESDEL (376 aa)) are interaction with ACTN. Cys-1094 and Cys-1146 are joined by a disulfide.

Belongs to the myotilin/palladin family. In terms of assembly, interacts with TTN/titin, NEB, NEBL, ACTN2 and CARP. Expressed in adult skeletal muscle and fetal heart.

It is found in the cytoplasm. The protein localises to the nucleus. Its subcellular location is the myofibril. The protein resides in the sarcomere. It localises to the z line. In terms of biological role, component of the sarcomere that tethers together nebulin (skeletal muscle) and nebulette (cardiac muscle) to alpha-actinin, at the Z lines. This chain is Myopalladin (MYPN), found in Homo sapiens (Human).